A 192-amino-acid chain; its full sequence is NF-kappa-B inhibitor-interacting Ras-like protein 1 (192 aa).

11 to 18 (GLLSVGKT) provides a ligand contact to GTP. The Effector region signature appears at 35-43 (DCETLEDVY). Residues 58-93 (HLYDTRGLQKGVELPKHYFSFADGFVLVYSVNNLES) form an interactions with NFKBIA and NFKBIB region. GTP-binding positions include 61–65 (DTRGL) and 120–123 (NKLD). Residues 168-192 (LSQPQSKSSFPLPGRKNKGNSNPEN) form a disordered region.

It belongs to the small GTPase superfamily. Ras family. KappaB-Ras subfamily. As to quaternary structure, interacts with both NF-kappa-B inhibitor alpha (NFKBIA) and beta (NFKBIB) in vitro. However, it probably only interacts with NFKBIB in vivo. Forms a complex with NFKBIB and NF-kappa-B heterodimer (p50/NFKB1 and p65/RELA). Also interacts with c-Rel (REL).

The protein resides in the cytoplasm. Functionally, atypical Ras-like protein that acts as a potent regulator of NF-kappa-B activity by preventing the degradation of NF-kappa-B inhibitor beta (NFKBIB) by most signals, explaining why NFKBIB is more resistant to degradation. May act by blocking phosphorylation of NFKBIB and mediating cytoplasmic retention of p65/RELA NF-kappa-B subunit. It is unclear whether it acts as a GTPase. Both GTP- and GDP-bound forms block phosphorylation of NFKBIB. The chain is NF-kappa-B inhibitor-interacting Ras-like protein 1 (Nkiras1) from Mus musculus (Mouse).